A 504-amino-acid chain; its full sequence is ATP synthase subunit alpha (504 aa).

171 to 178 (GDRQTGKT) is an ATP binding site.

This sequence belongs to the ATPase alpha/beta chains family. In terms of assembly, F-type ATPases have 2 components, CF(1) - the catalytic core - and CF(0) - the membrane proton channel. CF(1) has five subunits: alpha(3), beta(3), gamma(1), delta(1), epsilon(1). CF(0) has three main subunits: a(1), b(2) and c(9-12). The alpha and beta chains form an alternating ring which encloses part of the gamma chain. CF(1) is attached to CF(0) by a central stalk formed by the gamma and epsilon chains, while a peripheral stalk is formed by the delta and b chains.

It is found in the cell inner membrane. The catalysed reaction is ATP + H2O + 4 H(+)(in) = ADP + phosphate + 5 H(+)(out). Its function is as follows. Produces ATP from ADP in the presence of a proton gradient across the membrane. The alpha chain is a regulatory subunit. The chain is ATP synthase subunit alpha from Sulfurovum sp. (strain NBC37-1).